Consider the following 257-residue polypeptide: TLC domain-containing protein 3A (257 aa).

Transmembrane regions (helical) follow at residues 1–21, 42–62, 77–97, 113–135, 142–162, 181–201, and 220–240; these read MLLTLAGGALFFPGLFALCTW, LVSSVHAVLATGSGIVIIRSC, VWFLIPYMIYDSYAMYLCEWC, FLSRNRLMITHHAVILFVLVPVA, LGDFFVGCIFTAELSTPFVSL, GILTLATFLSCRILLFPFMYW, and FYCNVANAFLVAPQIYWFCLL. Residues 33–249 form the TLC domain; sequence TDCVMISTRL…LCRKAVRLFD (217 aa).

As to quaternary structure, interacts with GGT7 isoform 3 and SLC3A2. As to expression, highly expressed in pancreas. Detected at intermediate levels in heart, placenta and kidney, and at low levels in brain, liver and skeletal muscle. Not detected in normal lung.

It is found in the cell membrane. This chain is TLC domain-containing protein 3A, found in Homo sapiens (Human).